Reading from the N-terminus, the 312-residue chain is DNA-directed RNA polymerase subunit alpha (312 aa).

Residues 1-226 (MIEFEKPIIT…EHLNLFTDLT (226 aa)) form an alpha N-terminal domain (alpha-NTD) region. The interval 243–312 (DEKVLDRTIE…DLGLGLKNDK (70 aa)) is alpha C-terminal domain (alpha-CTD).

It belongs to the RNA polymerase alpha chain family. Homodimer. The RNAP catalytic core consists of 2 alpha, 1 beta, 1 beta' and 1 omega subunit. When a sigma factor is associated with the core the holoenzyme is formed, which can initiate transcription.

The enzyme catalyses RNA(n) + a ribonucleoside 5'-triphosphate = RNA(n+1) + diphosphate. In terms of biological role, DNA-dependent RNA polymerase catalyzes the transcription of DNA into RNA using the four ribonucleoside triphosphates as substrates. In Streptococcus pyogenes serotype M3 (strain ATCC BAA-595 / MGAS315), this protein is DNA-directed RNA polymerase subunit alpha.